Consider the following 186-residue polypeptide: Interferon beta (186 aa).

Residues 1–21 form the signal peptide; it reads MTYRWILPMALLLCFSTTALS. Phosphotyrosine is present on Tyr-24. An intrachain disulfide couples Cys-52 to Cys-161. Asn-101 and Asn-136 each carry an N-linked (GlcNAc...) asparagine glycan.

Belongs to the alpha/beta interferon family. Monomer.

It localises to the secreted. Type I interferon cytokine that plays a key role in the innate immune response to infection, developing tumors and other inflammatory stimuli. Signals via binding to high-affinity (IFNAR2) and low-affinity (IFNAR1) heterodimeric receptor, activating the canonical Jak-STAT signaling pathway resulting in transcriptional activation or repression of interferon-regulated genes that encode the effectors of the interferon response, such as antiviral proteins, regulators of cell proliferation and differentiation, and immunoregulatory proteins. Signals mostly via binding to a IFNAR1-IFNAR2 heterodimeric receptor, but can also function with IFNAR1 alone and independently of Jak-STAT pathways. Elicits a wide variety of responses, including antiviral and antibacterial activities, and can regulate the development of B-cells, myelopoiesis and lipopolysaccharide (LPS)-inducible production of tumor necrosis factor. Plays a role in neuronal homeostasis by regulating dopamine turnover and protecting dopaminergic neurons: acts by promoting neuronal autophagy and alpha-synuclein clearance, thereby preventing dopaminergic neuron loss. IFNB1 is more potent than interferon-alpha (IFN-alpha) in inducing the apoptotic and antiproliferative pathways required for control of tumor cell growth. The protein is Interferon beta (IFNB1) of Equus caballus (Horse).